Consider the following 1826-residue polypeptide: Protein TIC 214 (1826 aa).

A run of 5 helical transmembrane segments spans residues 18 to 38 (IINS…FSIG), 67 to 87 (FITG…HLAL), 127 to 147 (LSIQ…HFIL), 175 to 195 (VGWL…LVWI), and 221 to 241 (IFSI…PSPI). A disordered region spans residues 250–308 (TEEGWESEEETDVEIETASETKGTKQEQEGSTEEDPSPSLFSEEKEDPDKIDETEEIRV). Composition is skewed to acidic residues over residues 252–266 (EGWE…EIET) and 293–304 (EKEDPDKIDETE). A helical transmembrane segment spans residues 774-794 (LILIIQSIFRKYILLPSLIIV). Residues 1032–1057 (TKGLMKEKNSNAKKRGSPNKTSFNRK) are disordered. Positions 1042 to 1057 (NAKKRGSPNKTSFNRK) are enriched in basic residues. A helical transmembrane segment spans residues 1081-1101 (FYLFITIFIKRIYIDIFVCII).

It belongs to the TIC214 family. In terms of assembly, part of the Tic complex.

Its subcellular location is the plastid. The protein localises to the chloroplast inner membrane. Its function is as follows. Involved in protein precursor import into chloroplasts. May be part of an intermediate translocation complex acting as a protein-conducting channel at the inner envelope. This is Protein TIC 214 from Daucus carota (Wild carrot).